The chain runs to 314 residues: Malate dehydrogenase (314 aa).

9–15 (IGVGNVG) serves as a coordination point for NAD(+). Residues arginine 84 and arginine 90 each coordinate substrate. NAD(+)-binding positions include asparagine 97 and 120 to 122 (ISN). Substrate-binding residues include asparagine 122 and arginine 153. Catalysis depends on histidine 177, which acts as the Proton acceptor.

The protein belongs to the LDH/MDH superfamily.

It catalyses the reaction (S)-malate + NAD(+) = oxaloacetate + NADH + H(+). Its function is as follows. Catalyzes the reversible oxidation of malate to oxaloacetate. This Aliarcobacter butzleri (strain RM4018) (Arcobacter butzleri) protein is Malate dehydrogenase.